Consider the following 916-residue polypeptide: Major intrinsically disordered Notch2-binding receptor 1 (916 aa).

The Cytoplasmic segment spans residues 1–891 (METSQETSLF…AEFRRAKVCK (891 aa)). Disordered regions lie at residues 390–409 (EEKLHYPNASSQTPNFPAPE), 553–591 (KSDCDSSPEHNLTKIANGVPNSKGDKGNRPENTHHSEEE), 648–675 (SLTSEGPSDDSASPRMFHAHSGSHGPKL), 705–726 (TRPSSRSLTEENSATESKIASI), and 745–782 (NEEEIKDTGPGDNKDWHRKSKEADRQYDIPPQHRLPKQ). Composition is skewed to basic and acidic residues over residues 553–564 (KSDCDSSPEHNL) and 575–591 (KGDKGNRPENTHHSEEE). S711 bears the Phosphoserine mark. Over residues 750–771 (KDTGPGDNKDWHRKSKEADRQY) the composition is skewed to basic and acidic residues. A helical transmembrane segment spans residues 892 to 912 (IAALIAAAACTVILVIVVPIC). Topologically, residues 913 to 916 (TMKS) are extracellular.

It belongs to the MINAR family. In terms of assembly, interacts with NOTCH2; this interaction increases MINAR1 stability. Interacts (via N-terminus) with DEPTOR (via PDZ domain); this interaction may stabilize DEPTOR protein by impairing its ubiquitination. As to expression, widely expressed, including in breast epithelial cells and endothelial cells (at protein level). Expression is down-regulated in advanced breast tumors (at protein level).

It is found in the cell membrane. Intrinsically disordered protein which may negatively regulate mTOR signaling pathway by stabilizing the mTOR complex component DEPTOR. Negatively regulates angiogenesis. Negatively regulates cell growth. Negatively regulates neurite outgrowth in hippocampal neurons. The polypeptide is Major intrinsically disordered Notch2-binding receptor 1 (Homo sapiens (Human)).